The sequence spans 419 residues: Protein distal antenna-related (419 aa).

The 52-residue stretch at 15–66 (TRGKRPLRNLTPNDKVRAIQRIHNGETKASVSRDIGVPESTLRGWCKNEQKL) folds into the HTH psq-type domain. The H-T-H motif DNA-binding region spans 42-62 (KASVSRDIGVPESTLRGWCKN). Disordered regions lie at residues 333-359 (QPGG…PDLE) and 378-419 (EASN…DAEQ).

As to quaternary structure, interacts with itself, dan, ey and dac to form a complex (or complexes) containing the RD factors. As to expression, coexpressed with dan in the presumptive distal antenna, but not in the leg imaginal disk. Both proteins are also expressed in the brain and the eye region of the eye-antenna disk. First detected in early L3 eye disks in cells surrounding the newly initiated morphogenetic furrow. Highly expressed in evenly spaced clusters of cells anterior to the furrow, lower levels within and posterior to the furrow.

The protein localises to the nucleus. Its function is as follows. Probable transcription factor with a role in the retinal determination (RD) network. Regulates ato expression and is required for normal R8 induction and differentiation. Danr appears to repress Dan expression, but Dan is required for Danr expression anterior to the morphogenetic furrow (MF). Dan and Danr lie downstream of so and require dac function for highest levels of expression. Contributes to differentiation of antenna-specific characteristics; effector gene that acts downstream of homothorax (hth), Distal-less (Dll), cut (ct) and spineless (ss) genes to control differentiation of distal antennal structures. The protein is Protein distal antenna-related of Drosophila melanogaster (Fruit fly).